The primary structure comprises 488 residues: Histamine H1 receptor (488 aa).

Topologically, residues 1–38 (MSFLPGMTPVTLSNFSWALEDRMLEGNSTTTPTRQLMP) are extracellular. Asn-14 and Asn-27 each carry an N-linked (GlcNAc...) asparagine glycan. The chain crosses the membrane as a helical span at residues 39–59 (LVVVLSSVSLVTVALNLLVLY). Over 60–73 (AVRSERKLHTVGNL) the chain is Cytoplasmic. A helical membrane pass occupies residues 74–98 (YIVSLSVADLIVGAVVMPMSILYLH). Over 99–106 (RSAWILGR) the chain is Extracellular. The helical transmembrane segment at 107–132 (PLCLFWLSMDYVASTASIFSVFILCI) threads the bilayer. Cys-109 and Cys-189 form a disulfide bridge. Positions 116 and 121 each coordinate histamine. The important for agonist binding stretch occupies residues 116–121 (DYVAST). The Cytoplasmic segment spans residues 133-153 (DRYRSVQQPLRYLRYRTKTRA). Phosphothreonine occurs at positions 149 and 151. A helical transmembrane segment spans residues 154 to 173 (SATILGAWLLSFLWVIPILG). The Extracellular segment spans residues 174–197 (WHHFMAPTSEPREKKCETDFYDVT). The chain crosses the membrane as a helical span at residues 198–220 (WFKVMTAIINFYLPTLLMLWFYI). Asn-207 contacts histamine. The Cytoplasmic segment spans residues 221-417 (RIYKAVRRHC…LNRERKAAKQ (197 aa)). A Phosphoserine modification is found at Ser-239. Residues 259–274 (RMGKESPWEDPKRCSK) are compositionally biased toward basic and acidic residues. The tract at residues 259 to 285 (RMGKESPWEDPKRCSKDASGVHTPMPS) is disordered. Phosphoserine occurs at positions 345, 381, 383, 397, and 399. The helical transmembrane segment at 418–441 (LGCIMAAFILCWIPYFVFFMVIAF) threads the bilayer. Residues 425–429 (FILCW) form an important for agonist binding region. Histamine is bound at residue Tyr-432. A disulfide bridge links Cys-442 with Cys-445. At 442–447 (CKSCSN) the chain is on the extracellular side. The chain crosses the membrane as a helical span at residues 448-470 (EPVHMFTIWLGYLNSTLNPLIYP). Over 471-488 (LCNENFRKTFKRILRIPP) the chain is Cytoplasmic.

The protein belongs to the G-protein coupled receptor 1 family. In terms of processing, phosphorylation at sites in the second and third cytoplasmic loops independently contribute to agonist-induced receptor down-regulation.

It is found in the cell membrane. Functionally, G-protein-coupled receptor for histamine, a biogenic amine that functions as an immune modulator and a neurotransmitter. Through the H1 receptor, histamine mediates the contraction of smooth muscles and increases capillary permeability due to contraction of terminal venules. Also mediates neurotransmission in the central nervous system and thereby regulates circadian rhythms, emotional and locomotor activities as well as cognitive functions. The protein is Histamine H1 receptor of Cavia porcellus (Guinea pig).